The sequence spans 272 residues: Ethanolamine ammonia-lyase small subunit (272 aa).

Adenosylcob(III)alamin-binding residues include Val161, Glu182, and Cys211.

This sequence belongs to the EutC family. As to quaternary structure, the basic unit is a heterodimer which dimerizes to form tetramers. The heterotetramers trimerize; 6 large subunits form a core ring with 6 small subunits projecting outwards. Adenosylcob(III)alamin is required as a cofactor.

The protein resides in the bacterial microcompartment. It catalyses the reaction ethanolamine = acetaldehyde + NH4(+). The protein operates within amine and polyamine degradation; ethanolamine degradation. In terms of biological role, catalyzes the deamination of various vicinal amino-alcohols to oxo compounds. Allows this organism to utilize ethanolamine as the sole source of nitrogen and carbon in the presence of external vitamin B12. This Pseudomonas putida (strain W619) protein is Ethanolamine ammonia-lyase small subunit.